The chain runs to 162 residues: Endoribonuclease YbeY (162 aa).

Zn(2+)-binding residues include histidine 117, histidine 121, and histidine 127.

Belongs to the endoribonuclease YbeY family. The cofactor is Zn(2+).

It is found in the cytoplasm. Single strand-specific metallo-endoribonuclease involved in late-stage 70S ribosome quality control and in maturation of the 3' terminus of the 16S rRNA. The chain is Endoribonuclease YbeY from Francisella tularensis subsp. tularensis (strain WY96-3418).